The sequence spans 393 residues: Sister chromatid cohesion protein DCC1 (393 aa).

Belongs to the DCC1 family. Component of the CTF18-RFC complex which consists of CTF8, CTF18, DSCC1 and the RFC complex. Interacts with CTF8 and CTF18. Interacts with DDX11.

Its subcellular location is the nucleus. In terms of biological role, loads PCNA onto primed templates regulating velocity, spacing and restart activity of replication forks. May couple DNA replication to sister chromatid cohesion through regulation of the acetylation of the cohesin subunit SMC3. In Homo sapiens (Human), this protein is Sister chromatid cohesion protein DCC1 (DSCC1).